The following is a 189-amino-acid chain: 5-hmdU DNA kinase (189 aa).

This sequence belongs to the thymidylate kinase family. 5-hmdU DNA kinase subfamily.

It catalyses the reaction 5-hydroxymethyl-dUMP in DNA + ATP = 5-phosphomethyl-dUMP in DNA + ADP + H(+). In terms of biological role, phosphorylates 5-hydroxymethyluracil (5hmdU) into 5-phosphomethyl-2'-deoxyuridine (5- PmdU) on DNA as a step in the pathway leading to thymidine hypermodifications in the viral genome. The phosphate is added internally to the DNA polymer. As a final result of the pathway of hypermodification, 5-AcNmdU substitutes for a subset of thymidines in the viral DNA. These modifications probably prevent degradation of viral genome by the host restriction-modification antiviral defense system. In Pseudomonas phage PaMx11, this protein is 5-hmdU DNA kinase.